The sequence spans 355 residues: Uroporphyrinogen decarboxylase (355 aa).

Substrate is bound by residues 27-31 (RQAGR), Asp-78, Tyr-155, Thr-210, and His-328.

Belongs to the uroporphyrinogen decarboxylase family. Homodimer.

It localises to the cytoplasm. The catalysed reaction is uroporphyrinogen III + 4 H(+) = coproporphyrinogen III + 4 CO2. It functions in the pathway porphyrin-containing compound metabolism; protoporphyrin-IX biosynthesis; coproporphyrinogen-III from 5-aminolevulinate: step 4/4. Functionally, catalyzes the decarboxylation of four acetate groups of uroporphyrinogen-III to yield coproporphyrinogen-III. The polypeptide is Uroporphyrinogen decarboxylase (Pseudomonas fluorescens (strain Pf0-1)).